The primary structure comprises 921 residues: Protein translocase subunit SecA (921 aa).

ATP is bound by residues Gln-87, 105-109 (GEGKT), and Asp-516. Zn(2+)-binding residues include Cys-905, Cys-907, Cys-916, and His-917.

The protein belongs to the SecA family. Monomer and homodimer. Part of the essential Sec protein translocation apparatus which comprises SecA, SecYEG and auxiliary proteins SecDF-YajC and YidC. Requires Zn(2+) as cofactor.

The protein resides in the cell inner membrane. Its subcellular location is the cytoplasm. It carries out the reaction ATP + H2O + cellular proteinSide 1 = ADP + phosphate + cellular proteinSide 2.. Functionally, part of the Sec protein translocase complex. Interacts with the SecYEG preprotein conducting channel. Has a central role in coupling the hydrolysis of ATP to the transfer of proteins into and across the cell membrane, serving both as a receptor for the preprotein-SecB complex and as an ATP-driven molecular motor driving the stepwise translocation of polypeptide chains across the membrane. This chain is Protein translocase subunit SecA, found in Polaromonas sp. (strain JS666 / ATCC BAA-500).